A 184-amino-acid chain; its full sequence is Ribulose bisphosphate carboxylase small subunit, chloroplastic 2 (184 aa).

The N-terminal 59 residues, 1–59 (MASSMMSNAATAVAVAATSGGAQANMVAPFNGLKSIASFPVTRKSNDITSIASNGGRVQ), are a transit peptide targeting the chloroplast.

Belongs to the RuBisCO small chain family. As to quaternary structure, heterohexadecamer of 8 large and 8 small subunits.

The protein resides in the plastid. It localises to the chloroplast. RuBisCO catalyzes two reactions: the carboxylation of D-ribulose 1,5-bisphosphate, the primary event in carbon dioxide fixation, as well as the oxidative fragmentation of the pentose substrate. Both reactions occur simultaneously and in competition at the same active site. Although the small subunit is not catalytic it is essential for maximal activity. The chain is Ribulose bisphosphate carboxylase small subunit, chloroplastic 2 from Amaranthus hypochondriacus (Prince-of-Wales feather).